The chain runs to 279 residues: D-aminoacyl-tRNA deacylase (279 aa).

The segment at Gly81 to Gly100 is disordered.

The protein belongs to the DtdA deacylase family. Monomer. The cofactor is Zn(2+).

It carries out the reaction a D-aminoacyl-tRNA + H2O = a tRNA + a D-alpha-amino acid + H(+). The enzyme catalyses glycyl-tRNA(Ala) + H2O = tRNA(Ala) + glycine + H(+). In terms of biological role, D-aminoacyl-tRNA deacylase with broad substrate specificity. By recycling D-aminoacyl-tRNA to D-amino acids and free tRNA molecules, this enzyme counteracts the toxicity associated with the formation of D-aminoacyl-tRNA entities in vivo. The chain is D-aminoacyl-tRNA deacylase from Aeropyrum pernix (strain ATCC 700893 / DSM 11879 / JCM 9820 / NBRC 100138 / K1).